The following is a 312-amino-acid chain: L-type lectin-like domain-containing protein C126.08c (312 aa).

Positions 1 to 22 (MFFSVKNVFLLGIFGFVLGALA) are cleaved as a signal peptide. The Extracellular segment spans residues 23–280 (ETSHLERLSL…QKKGSFKKRL (258 aa)). In terms of domain architecture, L-type lectin-like spans 24–248 (TSHLERLSLE…EIASILSRTI (225 aa)). The helical transmembrane segment at 281–301 (IILLLSLIVIFSIFALRSYQV) threads the bilayer. Over 302 to 312 (QQEKNRRTTVL) the chain is Cytoplasmic.

It localises to the membrane. Its subcellular location is the endoplasmic reticulum. It is found in the golgi apparatus. The protein resides in the vacuole. The chain is L-type lectin-like domain-containing protein C126.08c from Schizosaccharomyces pombe (strain 972 / ATCC 24843) (Fission yeast).